We begin with the raw amino-acid sequence, 181 residues long: MCKGLAALPHSCLERAKEIKIKLGILLQKPESAVDLVIPYNEKPDKPVKIQKPSLDEALQWRDSLDKLLQNNYGLASFKSFLKSEFSEENLEFWMACEDYKKIKSPVKMAEKAKKIYEEFIQSEAPKEVNIDHFTKEITMKNLVEPSPSSFDVAQKRIYALMEKDSLPRFVRSEFYQEFIK.

Residues 64–180 (SLDKLLQNNY…VRSEFYQEFI (117 aa)) form the RGS domain.

The protein resides in the cytoplasm. The protein localises to the membrane. Inhibits signal transduction by increasing the GTPase activity of G protein alpha subunits thereby driving them into their inactive GDP-bound form. Binds to G(i)-alpha and G(o)-alpha, but not to G(s)-alpha. This Sus scrofa (Pig) protein is Regulator of G-protein signaling 5 (RGS5).